The sequence spans 228 residues: Small ribosomal subunit protein uS3 (228 aa).

The 69-residue stretch at 39-107 folds into the KH type-2 domain; sequence IRKELNEKLK…PVNINIEEIK (69 aa).

The protein belongs to the universal ribosomal protein uS3 family. In terms of assembly, part of the 30S ribosomal subunit. Forms a tight complex with proteins S10 and S14.

In terms of biological role, binds the lower part of the 30S subunit head. Binds mRNA in the 70S ribosome, positioning it for translation. The chain is Small ribosomal subunit protein uS3 from Hydrogenovibrio crunogenus (strain DSM 25203 / XCL-2) (Thiomicrospira crunogena).